The sequence spans 113 residues: Protein FMC1 homolog (113 aa).

The tract at residues 94–113 (SAGLVGLQLPHQPGGKGWEP) is disordered.

Belongs to the FMC1 family. As to quaternary structure, interacts with ATPAF2.

It localises to the mitochondrion. Plays a role in the assembly/stability of the mitochondrial membrane ATP synthase (F(1)F(0) ATP synthase or Complex V). The sequence is that of Protein FMC1 homolog from Rattus norvegicus (Rat).